Consider the following 328-residue polypeptide: tRNA U34 carboxymethyltransferase (328 aa).

Carboxy-S-adenosyl-L-methionine-binding positions include K91, W105, K110, G130, 152–154 (DPS), M196, Y200, and R315.

Belongs to the class I-like SAM-binding methyltransferase superfamily. CmoB family. In terms of assembly, homotetramer.

The catalysed reaction is carboxy-S-adenosyl-L-methionine + 5-hydroxyuridine(34) in tRNA = 5-carboxymethoxyuridine(34) in tRNA + S-adenosyl-L-homocysteine + H(+). Functionally, catalyzes carboxymethyl transfer from carboxy-S-adenosyl-L-methionine (Cx-SAM) to 5-hydroxyuridine (ho5U) to form 5-carboxymethoxyuridine (cmo5U) at position 34 in tRNAs. The polypeptide is tRNA U34 carboxymethyltransferase (Psychromonas ingrahamii (strain DSM 17664 / CCUG 51855 / 37)).